A 217-amino-acid polypeptide reads, in one-letter code: Thymidylate kinase (217 aa).

ATP is bound at residue 12–19 (GIDGSGKS).

Belongs to the thymidylate kinase family.

The catalysed reaction is dTMP + ATP = dTDP + ADP. In terms of biological role, phosphorylation of dTMP to form dTDP in both de novo and salvage pathways of dTTP synthesis. This is Thymidylate kinase from Cereibacter sphaeroides (strain ATCC 17023 / DSM 158 / JCM 6121 / CCUG 31486 / LMG 2827 / NBRC 12203 / NCIMB 8253 / ATH 2.4.1.) (Rhodobacter sphaeroides).